The sequence spans 1250 residues: DNA-directed RNA polymerase subunit beta (1250 aa).

The tract at residues 1215–1250 (QDLNDDDINPDDTIDAELDDNLFDDDFDDTFDDDDL) is disordered.

It belongs to the RNA polymerase beta chain family. As to quaternary structure, the RNAP catalytic core consists of 2 alpha, 1 beta, 1 beta' and 1 omega subunit. When a sigma factor is associated with the core the holoenzyme is formed, which can initiate transcription.

The enzyme catalyses RNA(n) + a ribonucleoside 5'-triphosphate = RNA(n+1) + diphosphate. DNA-dependent RNA polymerase catalyzes the transcription of DNA into RNA using the four ribonucleoside triphosphates as substrates. The chain is DNA-directed RNA polymerase subunit beta from Acetivibrio thermocellus (strain ATCC 27405 / DSM 1237 / JCM 9322 / NBRC 103400 / NCIMB 10682 / NRRL B-4536 / VPI 7372) (Clostridium thermocellum).